Here is a 216-residue protein sequence, read N- to C-terminus: 3-keto-L-gulonate-6-phosphate decarboxylase UlaD (216 aa).

Asp-11 is a substrate binding site. Mg(2+) contacts are provided by Glu-33 and Asp-62. A substrate-binding site is contributed by Arg-192.

Belongs to the HPS/KGPDC family. KGPDC subfamily. Homodimer. It depends on Mg(2+) as a cofactor.

The catalysed reaction is 3-dehydro-L-gulonate 6-phosphate + H(+) = L-xylulose 5-phosphate + CO2. The protein operates within cofactor degradation; L-ascorbate degradation; D-xylulose 5-phosphate from L-ascorbate: step 2/4. In terms of biological role, catalyzes the decarboxylation of 3-keto-L-gulonate-6-P into L-xylulose-5-P. Is involved in the anaerobic L-ascorbate utilization. The protein is 3-keto-L-gulonate-6-phosphate decarboxylase UlaD of Shigella dysenteriae serotype 1 (strain Sd197).